A 501-amino-acid polypeptide reads, in one-letter code: Mitogen-activated protein kinase MKC1 (501 aa).

Positions 28-339 constitute a Protein kinase domain; sequence FKIVKELGHG…VRDALNHKYL (312 aa). Residues 34–42 and Lys74 each bind ATP; that span reads LGHGAYGIV. Asp174 serves as the catalytic Proton acceptor. Phosphothreonine is present on Thr211. The short motif at 211–213 is the TXY element; it reads TEY. Position 213 is a phosphotyrosine (Tyr213). The interval 400-450 is disordered; sequence MQKREEQRQEEEEKELLEQQRQFPAQESMDISQTPYNNLETNIGTPQVEDD. Residues 422 to 444 are compositionally biased toward polar residues; it reads FPAQESMDISQTPYNNLETNIGT.

Belongs to the protein kinase superfamily. CMGC Ser/Thr protein kinase family. MAP kinase subfamily. It depends on Mg(2+) as a cofactor. Post-translationally, dually phosphorylated on Thr-211 and Tyr-213, which activates the enzyme.

The catalysed reaction is L-seryl-[protein] + ATP = O-phospho-L-seryl-[protein] + ADP + H(+). It carries out the reaction L-threonyl-[protein] + ATP = O-phospho-L-threonyl-[protein] + ADP + H(+). With respect to regulation, activated by tyrosine and threonine phosphorylation. The protein is Mitogen-activated protein kinase MKC1 (MKC1) of Candida albicans (Yeast).